Reading from the N-terminus, the 446-residue chain is tRNA-2-methylthio-N(6)-dimethylallyladenosine synthase (446 aa).

One can recognise an MTTase N-terminal domain in the interval 3–120 (KKIYIKTFGC…LPEMLKQRRS (118 aa)). C12, C49, C83, C157, C161, and C164 together coordinate [4Fe-4S] cluster. The 233-residue stretch at 143-375 (KVEGATAFVS…QAVIDQNTRR (233 aa)) folds into the Radical SAM core domain. A TRAM domain is found at 378 to 444 (DEMVGTVQRI…AYTLRGEIIV (67 aa)).

Belongs to the methylthiotransferase family. MiaB subfamily. Monomer. Requires [4Fe-4S] cluster as cofactor.

It is found in the cytoplasm. The catalysed reaction is N(6)-dimethylallyladenosine(37) in tRNA + (sulfur carrier)-SH + AH2 + 2 S-adenosyl-L-methionine = 2-methylsulfanyl-N(6)-dimethylallyladenosine(37) in tRNA + (sulfur carrier)-H + 5'-deoxyadenosine + L-methionine + A + S-adenosyl-L-homocysteine + 2 H(+). Functionally, catalyzes the methylthiolation of N6-(dimethylallyl)adenosine (i(6)A), leading to the formation of 2-methylthio-N6-(dimethylallyl)adenosine (ms(2)i(6)A) at position 37 in tRNAs that read codons beginning with uridine. In Janthinobacterium sp. (strain Marseille) (Minibacterium massiliensis), this protein is tRNA-2-methylthio-N(6)-dimethylallyladenosine synthase.